Reading from the N-terminus, the 341-residue chain is tRNA N6-adenosine threonylcarbamoyltransferase (341 aa).

The Fe cation site is built by His-112 and His-116. Substrate-binding positions include 138-142 (TVSGG), Asp-171, Gly-184, Asp-188, and Asn-279. Asp-307 serves as a coordination point for Fe cation.

The protein belongs to the KAE1 / TsaD family. Requires Fe(2+) as cofactor.

Its subcellular location is the cytoplasm. The enzyme catalyses L-threonylcarbamoyladenylate + adenosine(37) in tRNA = N(6)-L-threonylcarbamoyladenosine(37) in tRNA + AMP + H(+). Required for the formation of a threonylcarbamoyl group on adenosine at position 37 (t(6)A37) in tRNAs that read codons beginning with adenine. Is involved in the transfer of the threonylcarbamoyl moiety of threonylcarbamoyl-AMP (TC-AMP) to the N6 group of A37, together with TsaE and TsaB. TsaD likely plays a direct catalytic role in this reaction. This chain is tRNA N6-adenosine threonylcarbamoyltransferase, found in Riemerella anatipestifer (Moraxella anatipestifer).